The sequence spans 90 residues: MTKKELIDRVAKKAGAKKKDVKLILDTILETITEALAKGEKVQIVGFGSFEVRKAAARKGVNPQTRKPITIPERKVPKFKPGKALKEKVK.

Positions 57–90 (ARKGVNPQTRKPITIPERKVPKFKPGKALKEKVK) are disordered.

This sequence belongs to the bacterial histone-like protein family.

Functionally, histone-like DNA-binding protein which is capable of wrapping DNA to stabilize it, and thus to prevent its denaturation under extreme environmental conditions. This Thermotoga maritima (strain ATCC 43589 / DSM 3109 / JCM 10099 / NBRC 100826 / MSB8) protein is DNA-binding protein HU (hup).